Reading from the N-terminus, the 450-residue chain is Phosphoglucosamine mutase (450 aa).

The active-site Phosphoserine intermediate is Ser-101. Ser-101, Asp-240, Asp-242, and Asp-244 together coordinate Mg(2+). Ser-101 carries the phosphoserine modification.

Belongs to the phosphohexose mutase family. The cofactor is Mg(2+). Activated by phosphorylation.

The catalysed reaction is alpha-D-glucosamine 1-phosphate = D-glucosamine 6-phosphate. Its function is as follows. Catalyzes the conversion of glucosamine-6-phosphate to glucosamine-1-phosphate. The polypeptide is Phosphoglucosamine mutase (Streptococcus pneumoniae (strain Hungary19A-6)).